The primary structure comprises 107 residues: U1-lycotoxin-Ls1t (107 aa).

Residues 1–20 form the signal peptide; it reads MMKVLVVVALLVTLISYSSS. Positions 21–41 are excised as a propeptide; that stretch reads EGIDDLEADELLSLMANEQTR. Intrachain disulfides connect Cys-44–Cys-59, Cys-51–Cys-68, Cys-58–Cys-86, and Cys-70–Cys-84.

The protein belongs to the neurotoxin 19 (CSTX) family. 04 (U1-Lctx) subfamily. Expressed by the venom gland.

Its subcellular location is the secreted. This chain is U1-lycotoxin-Ls1t, found in Lycosa singoriensis (Wolf spider).